A 271-amino-acid polypeptide reads, in one-letter code: Short chain dehydrogenase virK (271 aa).

Residues L13, D59, N87, Y168, K172, V201, and T203 each contribute to the NADP(+) site. Y168 (proton donor) is an active-site residue. Residue K172 is the Lowers pKa of active site Tyr of the active site.

The protein belongs to the short-chain dehydrogenases/reductases (SDR) family.

It participates in secondary metabolite biosynthesis. Functionally, short chain dehydrogenase; part of the gene cluster that mediates the biosynthesis of virensols and trichoxide, fungal natural products that contain or are derived from a salicylaldehyde core. The pathway begins with the synthesis of the reduced chain in virensol C by the highly reducing polyketide synthase virA via condensation of one acetate and 8 malonate units. VirA has interesting programming rules since the first 2 ketides are fully reduced, the 3 following ketides undergo beta-dehydration, and the last 3 ketides are only reduced to beta-hydroxys to yield the trihydroxy portion. The production of aldehyde virensol C by virA alone is surprising, since virA does not contain a reductase (R) domain that is typically associated with reductive product release in HRPKS. The cupin-domain enzyme virC is involved in enhancing virA product turnover. The short-chain dehydrogenase virB then oxidizes the C-7 alcohol of virensol C to a ketone, yielding virensol D. Virensol D is further transformed to salicylaldehyde 5-deoxyaurocitrin by the short-chain dehydrogenase virD. VirD catalyzes the dehydrogenation of C-3 to form the beta-ketone aldehyde, which is followed by the generation of the nucleophilic C-2 that is required for the intramolecular aldol condensation between C-2 and C-7, itself followed by dehydration and aromatization which leads to salicylaldehyde 5-deoxyaurocitrin. While the dehydrogenation of virensol D is definitely catalyzed by virD, the aldol condensation and dehydration may be uncatalyzed or assisted by virD. The short chain dehydrogenase virG then converts salicylaldehyde 5-deoxyaurocitrin into virensol B which is further hydroxylated by the cytochrome P450 monooxygenase virE to yield the hydroquinone virensol A. VirI then may oxidize virensol A to form the quinone, while virH performs the epoxidation. Finally, the two remaining short-chain dehydrogenases, virK and virL, are probably responsible for reducing the ketones to the corresponding alcohols to furnish the epoxycyclohexanol structure in trichoxide. This is Short chain dehydrogenase virK from Hypocrea virens (strain Gv29-8 / FGSC 10586) (Gliocladium virens).